The chain runs to 2120 residues: Separin (2120 aa).

S1126 is modified (phosphoserine). Positions 1299 to 1355 are disordered; that stretch reads IKSVPGSEPSKTQGQKRSGRGRQKLASAPLRLNNTSQKGLEGRGLPCTPKPPDRIRQ. A phosphoserine mark is found at S1396 and S1399. Disordered regions lie at residues 1412–1485 and 1507–1561; these read AEEP…PEIM and GSDG…PRLR. 2 stretches are compositionally biased toward basic residues: residues 1418-1432 and 1454-1463; these read RGTA…RKGL and RSRRAKKVAS. Positions 1464–1473 are enriched in basic and acidic residues; that stretch reads RHCEERRPQR. S1508 bears the Phosphoserine mark. The span at 1548 to 1558 shows a compositional bias: basic and acidic residues; sequence PDKESDKDLGP. Residues 1945–2040 form the Peptidase C50 domain; sequence PRSTFYVLNP…SAALAVRGNL (96 aa). Residue C2029 is part of the active site.

Interacts with PTTG1. Interacts with RAD21. In terms of processing, autocleaves. This function, which is not essential for its protease activity, is unknown. Post-translationally, phosphorylated by CDK1. There are 8 Ser/Thr phosphorylation sites. Among them, Ser-1126 phosphorylation is the major site, which conducts to the enzyme inactivation.

It localises to the cytoplasm. The protein localises to the nucleus. The enzyme catalyses All bonds known to be hydrolyzed by this endopeptidase have arginine in P1 and an acidic residue in P4. P6 is often occupied by an acidic residue or by a hydroxy-amino-acid residue, the phosphorylation of which enhances cleavage.. With respect to regulation, regulated by at least two independent mechanisms. First, it is inactivated via its interaction with securin/PTTG1, which probably covers its active site. The association with PTTG1 is not only inhibitory, since PTTG1 is also required for activating it, the enzyme being inactive in cells in which PTTG1 is absent. PTTG1 degradation at anaphase, liberates it and triggers RAD21 cleavage. Second, phosphorylation at Ser-1126 inactivates it. The complete phosphorylation during mitosis, is removed when cells undergo anaphase. Activation of the enzyme at the metaphase-anaphase transition probably requires the removal of both securin and inhibitory phosphate. In terms of biological role, caspase-like protease, which plays a central role in the chromosome segregation by cleaving the SCC1/RAD21 subunit of the cohesin complex at the onset of anaphase. During most of the cell cycle, it is inactivated by different mechanisms. The chain is Separin (ESPL1) from Homo sapiens (Human).